A 145-amino-acid chain; its full sequence is Deoxyuridine 5'-triphosphate nucleotidohydrolase (145 aa).

Substrate is bound by residues arginine 63–glycine 65, glutamine 76, and threonine 80–aspartate 82.

It belongs to the dUTPase family. Requires Mg(2+) as cofactor.

It catalyses the reaction dUTP + H2O = dUMP + diphosphate + H(+). The protein operates within pyrimidine metabolism; dUMP biosynthesis; dUMP from dCTP (dUTP route): step 2/2. In terms of biological role, this enzyme is involved in nucleotide metabolism: it produces dUMP, the immediate precursor of thymidine nucleotides and it decreases the intracellular concentration of dUTP so that uracil cannot be incorporated into DNA. The protein is Deoxyuridine 5'-triphosphate nucleotidohydrolase of Chlamydia trachomatis serovar L2 (strain ATCC VR-902B / DSM 19102 / 434/Bu).